The sequence spans 168 residues: Prolyl-tRNA synthetase associated domain-containing protein 1 (168 aa).

It belongs to the PRORSD1 family.

This Xenopus laevis (African clawed frog) protein is Prolyl-tRNA synthetase associated domain-containing protein 1 (prorsd1p).